Reading from the N-terminus, the 992-residue chain is UPF0182 protein MT3285 (992 aa).

Transmembrane regions (helical) follow at residues 17-39 (RILIMIALGVIVLLLAGPRLIDA), 59-81 (LATRIVVCLVAGVVVGGIVFGGL), 113-135 (LVGIGIPAAIGLLAGIVAQSYWA), 169-191 (LMLSYMLVSVFLAFVANLVAHYI), 212-229 (LVSLVGVLVLLKAVAYWL), 255-277 (VLPAKLILMAIALICAAAVFSAI), and 284-306 (IPAIGLVLLLLSSLIVGAGWPLI). The segment at 906-938 (PTEAAVPPSPAANPPPPASGPQPPPVTAAPPVP) is disordered. A compositionally biased stretch (pro residues) spans 912–938 (PPSPAANPPPPASGPQPPPVTAAPPVP).

This sequence belongs to the UPF0182 family.

The protein resides in the cell membrane. This Mycobacterium tuberculosis (strain CDC 1551 / Oshkosh) protein is UPF0182 protein MT3285.